The following is a 708-amino-acid chain: Polyribonucleotide nucleotidyltransferase (708 aa).

2 residues coordinate Mg(2+): aspartate 488 and aspartate 494. The region spanning 555–615 (PIIKVTKVDP…ENVDKAIELI (61 aa)) is the KH domain. In terms of domain architecture, S1 motif spans 625–692 (GEVLEGKVTR…DLGRLQFKRV (68 aa)).

This sequence belongs to the polyribonucleotide nucleotidyltransferase family. The cofactor is Mg(2+).

The protein resides in the cytoplasm. It carries out the reaction RNA(n+1) + phosphate = RNA(n) + a ribonucleoside 5'-diphosphate. In terms of biological role, involved in mRNA degradation. Catalyzes the phosphorolysis of single-stranded polyribonucleotides processively in the 3'- to 5'-direction. This is Polyribonucleotide nucleotidyltransferase from Thermotoga petrophila (strain ATCC BAA-488 / DSM 13995 / JCM 10881 / RKU-1).